A 147-amino-acid chain; its full sequence is Histone-lysine N-methyltransferase, H3 lysine-37 specific (147 aa).

Positions 8 to 116 constitute an SET domain; sequence SPLEIRDTER…TNEELCISYG (109 aa).

This sequence belongs to the class V-like SAM-binding methyltransferase superfamily. In terms of assembly, homodimer.

The protein resides in the cytoplasm. The protein localises to the nucleus. It catalyses the reaction L-lysyl(37)-[histone H3] + S-adenosyl-L-methionine = N(6)-methyl-L-lysyl(37)-[histone H3] + S-adenosyl-L-homocysteine + H(+). The catalysed reaction is N(6)-methyl-L-lysyl(37)-[histone H3] + S-adenosyl-L-methionine = N(6),N(6)-dimethyl-L-lysyl(37)-[histone H3] + S-adenosyl-L-homocysteine + H(+). It carries out the reaction N(6),N(6)-dimethyl-L-lysyl(37)-[histone H3] + S-adenosyl-L-methionine = N(6),N(6),N(6)-trimethyl-L-lysyl(37)-[histone H3] + S-adenosyl-L-homocysteine + H(+). Histone lysine methyltransferase that specifically mono-, di-, and trimethylates 'Lys-37' of histone H3 to regulate sporulation. The protein is Histone-lysine N-methyltransferase, H3 lysine-37 specific of Schizosaccharomyces pombe (strain 972 / ATCC 24843) (Fission yeast).